The primary structure comprises 182 residues: Protein LURP-one-related 7 (182 aa).

It belongs to the LOR family.

In terms of biological role, might be related to the phospholipid scramblase and tubby-like superfamily of membrane tethered transcription factors. The sequence is that of Protein LURP-one-related 7 from Arabidopsis thaliana (Mouse-ear cress).